Consider the following 181-residue polypeptide: Large ribosomal subunit protein uL5c (181 aa).

This sequence belongs to the universal ribosomal protein uL5 family. Part of the 50S ribosomal subunit; contacts the 5S rRNA.

It is found in the plastid. In terms of biological role, binds 5S rRNA, forms part of the central protuberance of the 50S subunit. The polypeptide is Large ribosomal subunit protein uL5c (rpl5) (Helicosporidium sp. subsp. Simulium jonesii (Green alga)).